Consider the following 134-residue polypeptide: MGRDTIAEIITSIRNADMDRKRVVRIASTNITENIVQILLREGFIENVRKHREKNKYFLVLTLRHRRNRKRPYRNILNLKRISRPGLRIYSNYQRIPRILGGMGIVILSTSRGIMTDREARLEGIGGEILCYIW.

Belongs to the universal ribosomal protein uS8 family. As to quaternary structure, part of the 30S ribosomal subunit.

The protein localises to the plastid. It is found in the chloroplast. One of the primary rRNA binding proteins, it binds directly to 16S rRNA central domain where it helps coordinate assembly of the platform of the 30S subunit. The polypeptide is Small ribosomal subunit protein uS8c (rps8) (Nicotiana tabacum (Common tobacco)).